We begin with the raw amino-acid sequence, 247 residues long: ATP synthase subunit a, chloroplastic (247 aa).

The next 5 membrane-spanning stretches (helical) occupy residues 38–58 (QVLITSWVVIAILLGSATLAV), 95–115 (VPFIGTMFLFIFVSNWSGALL), 134–154 (INTTVALALLTSVAYFYAGLT), 199–219 (LVVVVLVSLVPSIVPIPVMFL), and 220–240 (GLFTSGIQALIFATLAAAYIG).

This sequence belongs to the ATPase A chain family. In terms of assembly, F-type ATPases have 2 components, CF(1) - the catalytic core - and CF(0) - the membrane proton channel. CF(1) has five subunits: alpha(3), beta(3), gamma(1), delta(1), epsilon(1). CF(0) has four main subunits: a, b, b' and c.

It is found in the plastid. It localises to the chloroplast thylakoid membrane. In terms of biological role, key component of the proton channel; it plays a direct role in the translocation of protons across the membrane. The sequence is that of ATP synthase subunit a, chloroplastic from Vitis vinifera (Grape).